Consider the following 133-residue polypeptide: MVSPEADRVLRYLVEVEELAEAVLSDKRQIVDLDTKRNQNREGLRALQKDPSVSEDVMVCFGNMFIKMPHLKTKEMIQKDQEHLDKEIERLRSQLKVKVNRLLEAQGKPELKGFNLNPLNQDELKALQVILKG.

Belongs to the prefoldin subunit beta family. In terms of assembly, component of the PAQosome complex which is responsible for the biogenesis of several protein complexes and which consists of R2TP complex members RUVBL1, RUVBL2, RPAP3 and PIH1D1, URI complex members PFDN2, PFDN6, PDRG1, UXT and URI1 as well as ASDURF, POLR2E and DNAAF10/WDR92.

The protein resides in the cytoplasm. Its function is as follows. May play a role in chaperone-mediated protein folding. This Rattus norvegicus (Rat) protein is p53 and DNA damage-regulated protein 1 (Pdrg1).